The following is a 288-amino-acid chain: POU domain class 2-associating factor 2 (288 aa).

The OCA domain occupies 10–32 (KRVYQGVRVKHTVKDLLAEKRSG). Disordered regions lie at residues 24-52 (DLLA…PFVQ) and 247-274 (PPKV…VKED). Low complexity predominate over residues 35 to 48 (SNSRLNGSVSSSQS).

Belongs to the POU2AF family. In terms of assembly, interacts with POU2F3 (via the POU domain) in a DNA-dependent manner; this interaction recruits POU2AF2 to chromatin and increases POU2F3 transactivation activity. As to expression, expressed in tuft cells of colon mucosa, as well as in small intestine and thymus.

Its subcellular location is the cytoplasm. It is found in the cytosol. It localises to the nucleus. Transcriptional coactivator of POU2F3. This complex drives the development of tuft cells, a rare chemosensory cells that coordinate immune and neural functions within mucosal epithelial tissues. The chain is POU domain class 2-associating factor 2 from Homo sapiens (Human).